We begin with the raw amino-acid sequence, 117 residues long: Small ribosomal subunit protein bS6 (117 aa).

Belongs to the bacterial ribosomal protein bS6 family.

In terms of biological role, binds together with bS18 to 16S ribosomal RNA. The polypeptide is Small ribosomal subunit protein bS6 (Trichodesmium erythraeum (strain IMS101)).